We begin with the raw amino-acid sequence, 367 residues long: Ribosomal lysine N-methyltransferase 5 (367 aa).

The segment at glutamate 55–glutamate 74 is disordered. A compositionally biased stretch (basic residues) spans arginine 58–lysine 68. S-adenosyl-L-methionine-binding positions include tryptophan 110, glycine 170–glycine 172, aspartate 192, tryptophan 256, and methionine 288.

Belongs to the class I-like SAM-binding methyltransferase superfamily. RKM5 family.

In terms of biological role, S-adenosyl-L-methionine-dependent protein-lysine N-methyltransferase that monomethylates 60S ribosomal protein L1 (RPL1A and RPL1B) at 'Lys-46'. The chain is Ribosomal lysine N-methyltransferase 5 (RKM5) from Saccharomyces cerevisiae (strain Lalvin EC1118 / Prise de mousse) (Baker's yeast).